The following is a 172-amino-acid chain: Large ribosomal subunit protein bL21m (172 aa).

A mitochondrion-targeting transit peptide spans 1–20; the sequence is MIRNIGSNLMKSSSSILLRN.

The protein belongs to the bacterial ribosomal protein bL21 family.

The protein resides in the mitochondrion. This is Large ribosomal subunit protein bL21m (mrpl21) from Dictyostelium discoideum (Social amoeba).